Consider the following 288-residue polypeptide: Mortality factor 4-like protein 2 (288 aa).

Positions 1-15 (MSSRKQGSQPRGQQS) are enriched in polar residues. Residues 1 to 113 (MSSRKQGSQP…RADPTVESEE (113 aa)) are disordered. Ser-71 carries the phosphoserine modification. The MRG domain occupies 117–288 (NRMEVKVKIP…ASAEYHRKAL (172 aa)).

As to quaternary structure, component of the NuA4 histone acetyltransferase complex which contains the catalytic subunit KAT5/TIP60 and the subunits EP400, TRRAP/PAF400, BRD8/SMAP, EPC1, DMAP1/DNMAP1, RUVBL1/TIP49, RUVBL2, ING3, actin, ACTL6A/BAF53A, MORF4L1/MRG15, MORF4L2/MRGX, MRGBP, YEATS4/GAS41 and VPS72/YL1. The NuA4 complex interacts with MYC and the adenovirus E1A protein. MORF4L1 may also participate in the formation of NuA4 related complexes which lack the KAT5/TIP60 catalytic subunit, but which include the SWI/SNF related protein SRCAP. Component of the MSIN3A histone deacetylase complex, which includes SIN3A, HDAC2, ARID4B, MORF4L1, RBBP4/RbAp48, and RBBP7/RbAp46. Interacts with MRFAP1 and RB1. May also interact with one or more as yet undefined members of the TLE (transducin-like enhancer of split) family of transcriptional repressors.

It localises to the nucleus. Functionally, component of the NuA4 histone acetyltransferase complex which is involved in transcriptional activation of select genes principally by acetylation of nucleosomal histone H4 and H2A. This modification may both alter nucleosome - DNA interactions and promote interaction of the modified histones with other proteins which positively regulate transcription. This complex may be required for the activation of transcriptional programs associated with oncogene and proto-oncogene mediated growth induction, tumor suppressor mediated growth arrest and replicative senescence, apoptosis, and DNA repair. The NuA4 complex ATPase and helicase activities seem to be, at least in part, contributed by the association of RUVBL1 and RUVBL2 with EP400. NuA4 may also play a direct role in DNA repair when directly recruited to sites of DNA damage. Also a component of the MSIN3A complex which acts to repress transcription by deacetylation of nucleosomal histones. The polypeptide is Mortality factor 4-like protein 2 (MORF4L2) (Macaca fascicularis (Crab-eating macaque)).